The chain runs to 401 residues: Imidazolonepropionase (401 aa).

His-66 and His-68 together coordinate Fe(3+). Zn(2+) is bound by residues His-66 and His-68. The 4-imidazolone-5-propanoate site is built by Arg-75, Tyr-138, and His-171. Tyr-138 provides a ligand contact to N-formimidoyl-L-glutamate. His-236 serves as a coordination point for Fe(3+). His-236 contacts Zn(2+). Gln-239 lines the 4-imidazolone-5-propanoate pocket. Residue Asp-311 coordinates Fe(3+). Asp-311 contacts Zn(2+). Residues Asn-313 and Gly-315 each contribute to the N-formimidoyl-L-glutamate site. Thr-316 is a 4-imidazolone-5-propanoate binding site.

This sequence belongs to the metallo-dependent hydrolases superfamily. HutI family. Zn(2+) is required as a cofactor. Requires Fe(3+) as cofactor.

The protein resides in the cytoplasm. It carries out the reaction 4-imidazolone-5-propanoate + H2O = N-formimidoyl-L-glutamate. The protein operates within amino-acid degradation; L-histidine degradation into L-glutamate; N-formimidoyl-L-glutamate from L-histidine: step 3/3. In terms of biological role, catalyzes the hydrolytic cleavage of the carbon-nitrogen bond in imidazolone-5-propanoate to yield N-formimidoyl-L-glutamate. It is the third step in the universal histidine degradation pathway. The polypeptide is Imidazolonepropionase (Acinetobacter baumannii (strain ACICU)).